Consider the following 109-residue polypeptide: Stress-response A/B barrel domain-containing protein HS1 (109 aa).

Positions 8–102 constitute a Stress-response A/B barrel domain; the sequence is VKHVLLASFK…SLDKVLVIDY (95 aa). Mg(2+) contacts are provided by valine 36, isoleucine 39, glutamate 40, and methionine 42.

As to quaternary structure, homodimer. It depends on Mg(2+) as a cofactor.

Its function is as follows. Heat stable protein involved in defense against fungal pathogens. Possesses antifungal activity against diverse pathogenic fungi. Possesses antimicrobial activity. Possesses ribonuclease activity. The protein is Stress-response A/B barrel domain-containing protein HS1 of Arabidopsis thaliana (Mouse-ear cress).